A 28-amino-acid polypeptide reads, in one-letter code: Putative GDSL-motif lipase/hydrolase-like protein (28 aa).

The protein belongs to the 'GDSL' lipolytic enzyme family.

This Populus euphratica (Euphrates poplar) protein is Putative GDSL-motif lipase/hydrolase-like protein.